A 285-amino-acid chain; its full sequence is Probable endonuclease 4 (285 aa).

9 residues coordinate Zn(2+): His69, His109, Glu145, Asp179, His182, His216, Asp229, His231, and Glu261.

Belongs to the AP endonuclease 2 family. Requires Zn(2+) as cofactor.

It catalyses the reaction Endonucleolytic cleavage to 5'-phosphooligonucleotide end-products.. Endonuclease IV plays a role in DNA repair. It cleaves phosphodiester bonds at apurinic or apyrimidinic (AP) sites, generating a 3'-hydroxyl group and a 5'-terminal sugar phosphate. The polypeptide is Probable endonuclease 4 (Citrobacter koseri (strain ATCC BAA-895 / CDC 4225-83 / SGSC4696)).